The following is a 383-amino-acid chain: Alanine racemase (383 aa).

Lys-50 functions as the Proton acceptor; specific for D-alanine in the catalytic mechanism. At Lys-50 the chain carries N6-(pyridoxal phosphate)lysine. Arg-151 lines the substrate pocket. Tyr-279 (proton acceptor; specific for L-alanine) is an active-site residue. A substrate-binding site is contributed by Met-327.

This sequence belongs to the alanine racemase family. The cofactor is pyridoxal 5'-phosphate.

It catalyses the reaction L-alanine = D-alanine. Its pathway is amino-acid biosynthesis; D-alanine biosynthesis; D-alanine from L-alanine: step 1/1. Catalyzes the interconversion of L-alanine and D-alanine. May also act on other amino acids. This chain is Alanine racemase (alr), found in Chlorobaculum tepidum (strain ATCC 49652 / DSM 12025 / NBRC 103806 / TLS) (Chlorobium tepidum).